The primary structure comprises 553 residues: LIM domain-containing protein B (553 aa).

The disordered stretch occupies residues 43–115 (LTYKDPNVST…SINNNISNNN (73 aa)). Positions 99–114 (GPGLPNNSINNNISNN) are enriched in low complexity. 5 consecutive LIM zinc-binding domains span residues 205–262 (PICG…ELFS), 263–322 (PRCF…RQKR), 328–387 (EICS…KQIL), 388–447 (NICG…FFGR), and 448–505 (QCFK…LPKE). The disordered stretch occupies residues 534 to 553 (ELKKERERAAKEKEKESKAK).

The protein localises to the cytoplasm. It localises to the cell cortex. The protein resides in the cytoskeleton. Its function is as follows. Regulates and controls rearrangements of the actin cytoskeleton. Required for tip formation, morphogenesis, cell adhesion and motility, chemotaxis and aggregates formation. May function downstream of paxB. The polypeptide is LIM domain-containing protein B (limB) (Dictyostelium discoideum (Social amoeba)).